The following is a 317-amino-acid chain: UV DNA damage endonuclease (317 aa).

This sequence belongs to the uve1/UvsE family.

Functionally, component in a DNA repair pathway. Removal of UV LIGHT damaged nucleotides. Recognizes pyrimidine dimers and cleave a phosphodiester bond immediately 5' to the lesion. The polypeptide is UV DNA damage endonuclease (Bacillus cereus (strain 03BB102)).